Consider the following 1040-residue polypeptide: Multidrug resistance protein MdtB (1040 aa).

12 consecutive transmembrane segments (helical) span residues 16–36 (FIMR…AGII), 342–362 (DTQF…YVFL), 369–389 (IIPA…MVFL), 396–416 (LTLM…IVVI), 440–460 (IGFT…PLLF), 472–492 (FAVT…TLTP), 537–557 (WATL…WIVI), 869–889 (LIVA…ESFI), 890–910 (HPVT…LALM), 911–931 (LSGS…IGIV), 968–988 (ILMT…STGV), and 998–1018 (IGMV…TPVI).

Belongs to the resistance-nodulation-cell division (RND) (TC 2.A.6) family. MdtB subfamily. In terms of assembly, part of a tripartite efflux system composed of MdtA, MdtB and MdtC. MdtB forms a heteromultimer with MdtC.

It is found in the cell inner membrane. The sequence is that of Multidrug resistance protein MdtB from Enterobacter sp. (strain 638).